The following is an 86-amino-acid chain: Thioredoxin (86 aa).

Active-site nucleophile residues include Cys15 and Cys18. Cys15 and Cys18 form a disulfide bridge.

The protein belongs to the glutaredoxin family.

In terms of biological role, does not function as a glutathione-disulfide oxidoreductase in the presence of glutathione and glutathione reductase. Has low thioredoxin activity in vitro. This chain is Thioredoxin, found in Methanocaldococcus jannaschii (strain ATCC 43067 / DSM 2661 / JAL-1 / JCM 10045 / NBRC 100440) (Methanococcus jannaschii).